The following is a 607-amino-acid chain: Elongation factor 4 (607 aa).

A tr-type G domain is found at 11-193; that stretch reads EKIRNFSIIA…QIVEKVPAPQ (183 aa). GTP contacts are provided by residues 23–28 and 140–143; these read DHGKST and NKID.

It belongs to the TRAFAC class translation factor GTPase superfamily. Classic translation factor GTPase family. LepA subfamily.

It localises to the cell membrane. It catalyses the reaction GTP + H2O = GDP + phosphate + H(+). In terms of biological role, required for accurate and efficient protein synthesis under certain stress conditions. May act as a fidelity factor of the translation reaction, by catalyzing a one-codon backward translocation of tRNAs on improperly translocated ribosomes. Back-translocation proceeds from a post-translocation (POST) complex to a pre-translocation (PRE) complex, thus giving elongation factor G a second chance to translocate the tRNAs correctly. Binds to ribosomes in a GTP-dependent manner. The sequence is that of Elongation factor 4 from Lactococcus lactis subsp. cremoris (strain SK11).